An 898-amino-acid chain; its full sequence is Protein argonaute 1 (898 aa).

Residues 1 to 52 (MLALNAGSQYPGRGRGRGRGDGGNRVHKHDGINRYHGGFRGGRGGGGGGFRD) are disordered. Over residues 18-33 (GRGDGGNRVHKHDGIN) the composition is skewed to basic and acidic residues. Residues 38–50 (GFRGGRGGGGGGF) show a composition bias toward gly residues. The PAZ domain occupies 283–378 (KCSDEMRRLR…IFADRTKMSR (96 aa)). Positions 542–883 (FAMVKLRTKE…YARKYGSLKS (342 aa)) constitute a Piwi domain.

It belongs to the argonaute family.

It is found in the cytoplasm. In terms of biological role, involved in RNA-mediated gene silencing (RNAi) of mobile elements and repeats including retroposons SLACS (Spliced Leader Associated Conserved Sequence), TATE (Telomere-Associated Transposable Element) and TAS-like sequences (Telomere Associated Sequence), and a family of 74-nucleotide long tandem repeats, CIR74. Predominantly binds to siRNAs derived from SLACS and TATE transposable elements and to a lesser extent to siRNAs from TAS-like and CIR74 elements. This chain is Protein argonaute 1, found in Leishmania braziliensis.